The primary structure comprises 241 residues: 15,16-dihydrobiliverdin:ferredoxin oxidoreductase (241 aa).

It belongs to the HY2 family.

The enzyme catalyses 15,16-dihydrobiliverdin + oxidized 2[4Fe-4S]-[ferredoxin] = biliverdin IXalpha + reduced 2[4Fe-4S]-[ferredoxin] + 2 H(+). Functionally, catalyzes the two-electron reduction of biliverdin IX-alpha at the C15 methine bridge. This chain is 15,16-dihydrobiliverdin:ferredoxin oxidoreductase (pebA), found in Prochlorococcus marinus (strain SARG / CCMP1375 / SS120).